We begin with the raw amino-acid sequence, 113 residues long: Hydrogenase maturation factor HypA (113 aa).

Residue H2 participates in Ni(2+) binding. Zn(2+) contacts are provided by C73, C76, C89, and C92.

It belongs to the HypA/HybF family.

Functionally, involved in the maturation of [NiFe] hydrogenases. Required for nickel insertion into the metal center of the hydrogenase. This chain is Hydrogenase maturation factor HypA, found in Azotobacter vinelandii.